A 105-amino-acid chain; its full sequence is Putative ferredoxin-3 (105 aa).

4Fe-4S ferredoxin-type domains follow at residues 17-46 (YLTAIDAMTCIGCGRCFKVCSREVMHLHGI) and 70-100 (TIMVVDHAGRCIGCGACARVCPKNCQTHVAA). The [4Fe-4S] cluster site is built by Cys26, Cys29, Cys32, Cys36, Cys80, Cys83, Cys86, and Cys90.

The cofactor is [4Fe-4S] cluster.

In terms of biological role, ferredoxins are iron-sulfur proteins that transfer electrons in a wide variety of metabolic reactions. In Sinorhizobium fredii (strain NBRC 101917 / NGR234), this protein is Putative ferredoxin-3 (fdxB).